A 152-amino-acid polypeptide reads, in one-letter code: Putative pre-16S rRNA nuclease (152 aa).

The protein belongs to the YqgF nuclease family.

It is found in the cytoplasm. Could be a nuclease involved in processing of the 5'-end of pre-16S rRNA. The protein is Putative pre-16S rRNA nuclease of Synechocystis sp. (strain ATCC 27184 / PCC 6803 / Kazusa).